The following is a 225-amino-acid chain: UPF0758 protein swp_2203 (225 aa).

An MPN domain is found at 102-224 (ILSDPDLTRD…IVSFAERGWI (123 aa)). Histidine 173, histidine 175, and aspartate 186 together coordinate Zn(2+). The JAMM motif signature appears at 173 to 186 (HNHPSGIAEPSTAD).

It belongs to the UPF0758 family.

This Shewanella piezotolerans (strain WP3 / JCM 13877) protein is UPF0758 protein swp_2203.